Here is a 291-residue protein sequence, read N- to C-terminus: Formamidopyrimidine-DNA glycosylase (291 aa).

Pro-2 functions as the Schiff-base intermediate with DNA in the catalytic mechanism. The Proton donor role is filled by Glu-3. The active-site Proton donor; for beta-elimination activity is the Lys-61. 3 residues coordinate DNA: His-103, Arg-123, and Arg-165. Residues 251–285 (EVYGRGGQACSRCASTIRRDAFMNRSSFSCPACQP) form an FPG-type zinc finger. Arg-275 serves as the catalytic Proton donor; for delta-elimination activity.

This sequence belongs to the FPG family. Monomer. Zn(2+) is required as a cofactor.

The enzyme catalyses Hydrolysis of DNA containing ring-opened 7-methylguanine residues, releasing 2,6-diamino-4-hydroxy-5-(N-methyl)formamidopyrimidine.. It catalyses the reaction 2'-deoxyribonucleotide-(2'-deoxyribose 5'-phosphate)-2'-deoxyribonucleotide-DNA = a 3'-end 2'-deoxyribonucleotide-(2,3-dehydro-2,3-deoxyribose 5'-phosphate)-DNA + a 5'-end 5'-phospho-2'-deoxyribonucleoside-DNA + H(+). In terms of biological role, involved in base excision repair of DNA damaged by oxidation or by mutagenic agents. Acts as a DNA glycosylase that recognizes and removes damaged bases. Has a preference for oxidized purines, such as 7,8-dihydro-8-oxoguanine (8-oxoG). Has AP (apurinic/apyrimidinic) lyase activity and introduces nicks in the DNA strand. Cleaves the DNA backbone by beta-delta elimination to generate a single-strand break at the site of the removed base with both 3'- and 5'-phosphates. This chain is Formamidopyrimidine-DNA glycosylase, found in Parafrankia sp. (strain EAN1pec).